The following is a 313-amino-acid chain: 2,3-dihydroxyphenylpropionate/2,3-dihydroxicinnamic acid 1,2-dioxygenase (313 aa).

His115 functions as the Proton donor in the catalytic mechanism. His179 (proton acceptor) is an active-site residue.

This sequence belongs to the LigB/MhpB extradiol dioxygenase family. Homotetramer. The cofactor is Fe(2+).

It catalyses the reaction 3-(2,3-dihydroxyphenyl)propanoate + O2 = (2Z,4E)-2-hydroxy-6-oxonona-2,4-dienedioate + H(+). It carries out the reaction (2E)-3-(2,3-dihydroxyphenyl)prop-2-enoate + O2 = (2Z,4E,7E)-2-hydroxy-6-oxonona-2,4,7-trienedioate + H(+). The protein operates within aromatic compound metabolism; 3-phenylpropanoate degradation. In terms of biological role, catalyzes the non-heme iron(II)-dependent oxidative cleavage of 2,3-dihydroxyphenylpropionic acid and 2,3-dihydroxicinnamic acid into 2-hydroxy-6-ketononadienedioate and 2-hydroxy-6-ketononatrienedioate, respectively. The polypeptide is 2,3-dihydroxyphenylpropionate/2,3-dihydroxicinnamic acid 1,2-dioxygenase (Xanthobacter autotrophicus (strain ATCC BAA-1158 / Py2)).